The chain runs to 117 residues: uncharacterized protein (117 aa).

Residues 57 to 77 (LGFPLGLLVFLHSLIVARFFV) form a helical membrane-spanning segment.

The protein resides in the membrane. This is an uncharacterized protein from Schizosaccharomyces pombe (strain 972 / ATCC 24843) (Fission yeast).